The following is a 259-amino-acid chain: Hydroxyethylthiazole kinase (259 aa).

M50 is a substrate binding site. 2 residues coordinate ATP: R122 and T168. G195 contributes to the substrate binding site.

It belongs to the Thz kinase family. Mg(2+) is required as a cofactor.

It carries out the reaction 5-(2-hydroxyethyl)-4-methylthiazole + ATP = 4-methyl-5-(2-phosphooxyethyl)-thiazole + ADP + H(+). It participates in cofactor biosynthesis; thiamine diphosphate biosynthesis; 4-methyl-5-(2-phosphoethyl)-thiazole from 5-(2-hydroxyethyl)-4-methylthiazole: step 1/1. Its function is as follows. Catalyzes the phosphorylation of the hydroxyl group of 4-methyl-5-beta-hydroxyethylthiazole (THZ). The sequence is that of Hydroxyethylthiazole kinase from Escherichia coli O127:H6 (strain E2348/69 / EPEC).